The sequence spans 223 residues: Oxaloacetate tautomerase FAHD1, mitochondrial (223 aa).

The transit peptide at 1-30 (MATSMIQRMFKQGTKIVCVGRNYAAHAKEL) directs the protein to the mitochondrion. Positions 67, 69, and 98 each coordinate Mg(2+).

Belongs to the FAH family. Mg(2+) serves as cofactor. It depends on Mn(2+) as a cofactor.

The protein resides in the mitochondrion. The catalysed reaction is oxaloacetate = enol-oxaloacetate. Its function is as follows. Tautomerase that converts enol-oxaloacetate, a strong inhibitor of succinate dehydrogenase, to the physiological keto form of oxaloacetate. The protein is Oxaloacetate tautomerase FAHD1, mitochondrial of Arabidopsis thaliana (Mouse-ear cress).